Here is a 1178-residue protein sequence, read N- to C-terminus: Integrin alpha-2 (1178 aa).

The signal sequence occupies residues 1–26; sequence MGPGQAGGALLLRLLMLVQGILNCLA. The Extracellular segment spans residues 27 to 1129; that stretch reads YNVGLPGAKI…KPTEKAEVPT (1103 aa). 2 FG-GAP repeats span residues 31–89 and 98–158; these read LPGA…TATC and ASIS…FLTS. An intrachain disulfide couples Cys-80 to Cys-89. Asn-102 and Asn-109 each carry an N-linked (GlcNAc...) asparagine glycan. A VWFA domain is found at 185 to 362; it reads WEAVKNFLVK…TLGEQIFSIE (178 aa). FG-GAP repeat units follow at residues 363-417, 420-472, 474-536, 537-595, and 601-661; these read GTVQ…VIFP, AFDQ…KQGN, TVIQ…ILNQ, HQFL…TIRT, and ILGS…FTPD. Residues Asn-429, Asn-457, and Asn-472 are each glycosylated (N-linked (GlcNAc...) asparagine). The Cell attachment site signature appears at 480-482; the sequence is RGD. Ca(2+) is bound by residues Asp-496, Asp-498, Asp-500, Asp-504, Asp-560, Asn-562, Asp-564, Asp-568, Asp-624, Asn-626, Asp-628, and Asp-632. 5 disulfide bridges follow: Cys-677/Cys-734, Cys-786/Cys-792, Cys-862/Cys-873, Cys-1016/Cys-1047, and Cys-1052/Cys-1057. Asn-696 carries N-linked (GlcNAc...) asparagine glycosylation. N-linked (GlcNAc...) asparagine glycosylation is found at Asn-1054, Asn-1071, and Asn-1078. Residues 1130-1151 form a helical membrane-spanning segment; sequence GVIIGSIIAGILLLLAMTAGLW. Residues 1152-1178 are Cytoplasmic-facing; it reads KLGFFKRQYKKMGQNPDEMDETTELNS. The short motif at 1154-1158 is the GFFKR motif element; the sequence is GFFKR.

The protein belongs to the integrin alpha chain family. In terms of assembly, heterodimer of an alpha and a beta subunit. Alpha-2 associates with beta-1. Interacts with HPS5 and RAB21.

The protein resides in the membrane. Functionally, integrin alpha-2/beta-1 is a collagen receptor, being responsible for adhesion of platelets and other cells to collagens, modulation of collagen and collagenase gene expression, force generation and organization of newly synthesized extracellular matrix. It is also a receptor for laminins, collagen C-propeptides and E-cadherin. Mice homozygous for a null mutation in the alpha-2 die very early in embryogenesis. The chain is Integrin alpha-2 (Itga2) from Mus musculus (Mouse).